A 485-amino-acid polypeptide reads, in one-letter code: Protein nucleotidyltransferase YdiU (485 aa).

ATP-binding residues include Gly-90, Gly-92, Arg-93, Lys-113, Asp-125, Gly-126, Arg-176, and Arg-183. Asp-252 acts as the Proton acceptor in catalysis. Residues Asn-253 and Asp-262 each contribute to the Mg(2+) site. Asp-262 is a binding site for ATP.

Belongs to the SELO family. It depends on Mg(2+) as a cofactor. Requires Mn(2+) as cofactor.

The catalysed reaction is L-seryl-[protein] + ATP = 3-O-(5'-adenylyl)-L-seryl-[protein] + diphosphate. The enzyme catalyses L-threonyl-[protein] + ATP = 3-O-(5'-adenylyl)-L-threonyl-[protein] + diphosphate. It catalyses the reaction L-tyrosyl-[protein] + ATP = O-(5'-adenylyl)-L-tyrosyl-[protein] + diphosphate. It carries out the reaction L-histidyl-[protein] + UTP = N(tele)-(5'-uridylyl)-L-histidyl-[protein] + diphosphate. The catalysed reaction is L-seryl-[protein] + UTP = O-(5'-uridylyl)-L-seryl-[protein] + diphosphate. The enzyme catalyses L-tyrosyl-[protein] + UTP = O-(5'-uridylyl)-L-tyrosyl-[protein] + diphosphate. Nucleotidyltransferase involved in the post-translational modification of proteins. It can catalyze the addition of adenosine monophosphate (AMP) or uridine monophosphate (UMP) to a protein, resulting in modifications known as AMPylation and UMPylation. The sequence is that of Protein nucleotidyltransferase YdiU from Aliivibrio fischeri (strain ATCC 700601 / ES114) (Vibrio fischeri).